A 369-amino-acid chain; its full sequence is Melanoma-associated antigen 10 (369 aa).

Residues 1 to 131 form a disordered region; that stretch reads MPRAPKRQRC…VLPDSESLPR (131 aa). The segment covering 39–62 has biased composition (low complexity); that stretch reads SSSTSTSSSFPSSFPSSSSSSSSS. Composition is skewed to polar residues over residues 85–96 and 107–121; these read QSAQIACSSPSV and EGSSSQKEESPSTLQ. Residues 134–333 form the MAGE domain; it reads IDEKVTDLVQ…RSFPLWYEEA (200 aa). The tract at residues 340–369 is disordered; the sequence is RAQDRIATTDDTTAMASASSSATGSFSYPE. A compositionally biased stretch (low complexity) spans 348 to 369; the sequence is TDDTTAMASASSSATGSFSYPE.

Expressed in many tumors of several types, such as melanoma, head and neck squamous cell carcinoma, lung carcinoma and breast carcinoma, but not in normal tissues except for spermatogonia, spermatocytes and placenta.

It localises to the nucleus. Not known, though may play a role in embryonal development and tumor transformation or aspects of tumor progression. The protein is Melanoma-associated antigen 10 (MAGEA10) of Homo sapiens (Human).